A 304-amino-acid polypeptide reads, in one-letter code: MMMADIATAFPAIKILRDEPLAHYTHTKTGGPADYLAFPTNVQETKSLLAYANQISLPVTVVGNASNLIVRDGGIRGLVMILTQMAAITTAGNTVTAEAGAALITTTQVAQAHALSGLEFAAGIPGSVGGAIFMNAGAYGGEISTVAVAAEVLTPEGEIRTLNQAELDFGYRHSSIQDYHDIVLTATFALTPGDGAAIQAQMDDLNARRAAKQPLELPSCGSVFKRPVGHYTGQLIQEAGLQGLKWGGAQVSTKHAGFIVNIDHATATDYLELIHHIQAVILEKDGVTLETEVRIIGEEPTTQK.

The FAD-binding PCMH-type domain maps to 28–193 (KTGGPADYLA…LTATFALTPG (166 aa)). Residue Arg-172 is part of the active site. The active-site Proton donor is the Ser-222. Glu-292 is an active-site residue.

Belongs to the MurB family. Requires FAD as cofactor.

Its subcellular location is the cytoplasm. The enzyme catalyses UDP-N-acetyl-alpha-D-muramate + NADP(+) = UDP-N-acetyl-3-O-(1-carboxyvinyl)-alpha-D-glucosamine + NADPH + H(+). It participates in cell wall biogenesis; peptidoglycan biosynthesis. In terms of biological role, cell wall formation. The chain is UDP-N-acetylenolpyruvoylglucosamine reductase from Levilactobacillus brevis (strain ATCC 367 / BCRC 12310 / CIP 105137 / JCM 1170 / LMG 11437 / NCIMB 947 / NCTC 947) (Lactobacillus brevis).